We begin with the raw amino-acid sequence, 72 residues long: Gene 42 protein (72 aa).

The polypeptide is Gene 42 protein (42) (Mycobacterium phage L5 (Mycobacteriophage L5)).